A 452-amino-acid polypeptide reads, in one-letter code: Tol-Pal system protein TolB (452 aa).

The first 31 residues, 1-31 (MCGVRRGMGVLLLFCAVALCAMPFVVRSVWG), serve as a signal peptide directing secretion.

This sequence belongs to the TolB family. The Tol-Pal system is composed of five core proteins: the inner membrane proteins TolA, TolQ and TolR, the periplasmic protein TolB and the outer membrane protein Pal. They form a network linking the inner and outer membranes and the peptidoglycan layer.

The protein localises to the periplasm. Its function is as follows. Part of the Tol-Pal system, which plays a role in outer membrane invagination during cell division and is important for maintaining outer membrane integrity. The protein is Tol-Pal system protein TolB of Syntrophus aciditrophicus (strain SB).